The sequence spans 603 residues: F-box only protein 46 (603 aa).

The segment at 20 to 54 is disordered; sequence YSQNQPRPPSATLKPPVCPDTSSGTEPDHRPAHLE. A phosphoserine mark is found at Ser-21 and Ser-67. Disordered regions lie at residues 111 to 163, 235 to 301, 332 to 359, and 396 to 442; these read GGSR…PTSS, EAQR…TRAK, EASE…ARDC, and TVSP…GTTD. Phosphothreonine is present on Thr-347. The segment covering 347–356 has biased composition (pro residues); sequence TPPAPPPPPA. One can recognise an F-box domain in the interval 470–522; the sequence is RQYMLLLPEHVLVKIFSFLPTRALAALKCTCHHFKGIIEAFGVRATDSRWSRD.

Part of a SCF (SKP1-cullin-F-box) protein ligase complex SCF(FBXO46) composed of CUL1, SKP1, RBX1 and FBXO46. In terms of processing, phosphorylated by ATM in response to DNA damage, promoting ubiquitination and degradation by the SCF(FBXO31) complex. ATM-phosphorylated FBXO46 is ubiquitinated and degradaded by the SCF(FBXO31) complex in response to DNA damage.

The protein operates within protein modification; protein ubiquitination. Substrate-recognition component of the SCF(FBXO46) protein ligase complex, which mediates the ubiquitination and degradation of target proteins. In absence of stress, the SCF(FBXO46) complex catalyzes ubiquitination and degradation of MTOR-phosphorylated FBXO31. The protein is F-box only protein 46 (Fbxo46) of Rattus norvegicus (Rat).